We begin with the raw amino-acid sequence, 376 residues long: Queuine tRNA-ribosyltransferase (376 aa).

D89 (proton acceptor) is an active-site residue. Substrate contacts are provided by residues 89 to 93, D143, Q194, and G221; that span reads DSGGF. The RNA binding stretch occupies residues 252–258; it reads GVGLPSN. Residue D271 is the Nucleophile of the active site. An RNA binding; important for wobble base 34 recognition region spans residues 276–280; sequence ARNGR. Residues C309, C311, C314, and H340 each contribute to the Zn(2+) site.

The protein belongs to the queuine tRNA-ribosyltransferase family. In terms of assembly, homodimer. Within each dimer, one monomer is responsible for RNA recognition and catalysis, while the other monomer binds to the replacement base PreQ1. Requires Zn(2+) as cofactor.

It catalyses the reaction 7-aminomethyl-7-carbaguanine + guanosine(34) in tRNA = 7-aminomethyl-7-carbaguanosine(34) in tRNA + guanine. Its pathway is tRNA modification; tRNA-queuosine biosynthesis. In terms of biological role, catalyzes the base-exchange of a guanine (G) residue with the queuine precursor 7-aminomethyl-7-deazaguanine (PreQ1) at position 34 (anticodon wobble position) in tRNAs with GU(N) anticodons (tRNA-Asp, -Asn, -His and -Tyr). Catalysis occurs through a double-displacement mechanism. The nucleophile active site attacks the C1' of nucleotide 34 to detach the guanine base from the RNA, forming a covalent enzyme-RNA intermediate. The proton acceptor active site deprotonates the incoming PreQ1, allowing a nucleophilic attack on the C1' of the ribose to form the product. After dissociation, two additional enzymatic reactions on the tRNA convert PreQ1 to queuine (Q), resulting in the hypermodified nucleoside queuosine (7-(((4,5-cis-dihydroxy-2-cyclopenten-1-yl)amino)methyl)-7-deazaguanosine). This is Queuine tRNA-ribosyltransferase from Clostridium tetani (strain Massachusetts / E88).